We begin with the raw amino-acid sequence, 339 residues long: Peroxidase 29 (339 aa).

An N-terminal signal peptide occupies residues 1-28 (MKPKSKVAESTAASCFLVMSLLCSCIIG). 4 disulfides stabilise this stretch: C47/C127, C80/C85, C133/C335, and C213/C242. H78 acts as the Proton acceptor in catalysis. Ca(2+)-binding residues include D79, V82, G84, D86, and S88. Residue P176 participates in substrate binding. Heme b is bound at residue H206. T207 contacts Ca(2+). N-linked (GlcNAc...) asparagine glycosylation is present at N224. Ca(2+) contacts are provided by D260, T262, and D267.

It belongs to the peroxidase family. Classical plant (class III) peroxidase subfamily. Requires heme b as cofactor. The cofactor is Ca(2+).

It localises to the secreted. It catalyses the reaction 2 a phenolic donor + H2O2 = 2 a phenolic radical donor + 2 H2O. In terms of biological role, removal of H(2)O(2), oxidation of toxic reductants, biosynthesis and degradation of lignin, suberization, auxin catabolism, response to environmental stresses such as wounding, pathogen attack and oxidative stress. These functions might be dependent on each isozyme/isoform in each plant tissue. This chain is Peroxidase 29 (PER29), found in Arabidopsis thaliana (Mouse-ear cress).